The sequence spans 170 residues: Acetolactate synthase small subunit (170 aa).

Positions Thr9–Glu83 constitute an ACT domain. Residue Lys46 forms an Isoglutamyl lysine isopeptide (Lys-Gln) (interchain with Q-Cter in protein Pup) linkage.

The protein belongs to the acetolactate synthase small subunit family. Dimer of large and small chains.

The catalysed reaction is 2 pyruvate + H(+) = (2S)-2-acetolactate + CO2. It functions in the pathway amino-acid biosynthesis; L-isoleucine biosynthesis; L-isoleucine from 2-oxobutanoate: step 1/4. Its pathway is amino-acid biosynthesis; L-valine biosynthesis; L-valine from pyruvate: step 1/4. This Mycolicibacterium smegmatis (strain ATCC 700084 / mc(2)155) (Mycobacterium smegmatis) protein is Acetolactate synthase small subunit (ilvH).